The chain runs to 188 residues: VQ motif-containing protein 18 (188 aa).

Disordered stretches follow at residues 1-20 (MEITQYQSFHEGSSSRVSMN), 58-92 (LTGKPAPGEAKTGKKRAKSRITTPQEPVCDDHQPV), and 157-188 (GFIFNNNNNNNNNNNNNNNNNTNFDTKAHNSS). Positions 51 to 60 (FRSLVQSLTG) match the VQ motif. Residues 161–179 (NNNNNNNNNNNNNNNNNTN) are compositionally biased toward low complexity.

It localises to the nucleus. Functionally, may function as positive regulator of plant growth. This Arabidopsis thaliana (Mouse-ear cress) protein is VQ motif-containing protein 18.